Consider the following 282-residue polypeptide: Bifunctional protein FolD (282 aa).

NADP(+)-binding positions include 167–169 (GRS) and Ser192.

It belongs to the tetrahydrofolate dehydrogenase/cyclohydrolase family. Homodimer.

The enzyme catalyses (6R)-5,10-methylene-5,6,7,8-tetrahydrofolate + NADP(+) = (6R)-5,10-methenyltetrahydrofolate + NADPH. The catalysed reaction is (6R)-5,10-methenyltetrahydrofolate + H2O = (6R)-10-formyltetrahydrofolate + H(+). It participates in one-carbon metabolism; tetrahydrofolate interconversion. Catalyzes the oxidation of 5,10-methylenetetrahydrofolate to 5,10-methenyltetrahydrofolate and then the hydrolysis of 5,10-methenyltetrahydrofolate to 10-formyltetrahydrofolate. This Acidobacterium capsulatum (strain ATCC 51196 / DSM 11244 / BCRC 80197 / JCM 7670 / NBRC 15755 / NCIMB 13165 / 161) protein is Bifunctional protein FolD.